The primary structure comprises 186 residues: MEKYLIVGLGNPGSNYAKTRHNAGFMVINEICNKLNLFLDNSKFNGMFAKTIYNNCVVFFCQPTTYMNLSGEFVSKMLKFYDIPIKNLIVIYDDVDTKLGVIKLRKKGSSGGQNGIKNIINLLKTEEIKRIRVGIGKDPHAKLDQYVLSNFKIDELVIIKPAIIKGALAALEAIGEDFDKVMNKFN.

Residue Tyr16 coordinates tRNA. Residue His21 is the Proton acceptor of the active site. Positions 66, 68, and 114 each coordinate tRNA.

The protein belongs to the PTH family. In terms of assembly, monomer.

The protein resides in the cytoplasm. The enzyme catalyses an N-acyl-L-alpha-aminoacyl-tRNA + H2O = an N-acyl-L-amino acid + a tRNA + H(+). Its function is as follows. Hydrolyzes ribosome-free peptidyl-tRNAs (with 1 or more amino acids incorporated), which drop off the ribosome during protein synthesis, or as a result of ribosome stalling. Catalyzes the release of premature peptidyl moieties from peptidyl-tRNA molecules trapped in stalled 50S ribosomal subunits, and thus maintains levels of free tRNAs and 50S ribosomes. The polypeptide is Peptidyl-tRNA hydrolase (Ureaplasma urealyticum serovar 10 (strain ATCC 33699 / Western)).